The following is a 318-amino-acid chain: Probable arabinan endo-1,5-alpha-L-arabinosidase C (318 aa).

Positions 1-28 (MLSFVLLLCVALVNAYSDPGACSGTCWA) are cleaved as a signal peptide. Residue Asp30 is the Proton acceptor of the active site. Asn72, Asn80, and Asn188 each carry an N-linked (GlcNAc...) asparagine glycan. The active-site Proton donor is Glu196. Asn277 carries N-linked (GlcNAc...) asparagine glycosylation.

This sequence belongs to the glycosyl hydrolase 43 family.

The protein resides in the secreted. It carries out the reaction Endohydrolysis of (1-&gt;5)-alpha-arabinofuranosidic linkages in (1-&gt;5)-arabinans.. The protein operates within glycan metabolism; L-arabinan degradation. Endo-1,5-alpha-L-arabinanase involved in degradation of pectin. Its preferred substrate is linear 1,5-alpha-L-arabinan. The chain is Probable arabinan endo-1,5-alpha-L-arabinosidase C (abnC) from Aspergillus niger (strain ATCC MYA-4892 / CBS 513.88 / FGSC A1513).